Consider the following 89-residue polypeptide: Gallinacin-13 (89 aa).

The N-terminal stretch at 1 to 23 (MRILQLLFAIVVILLLQDAPARG) is a signal peptide. 3 cysteine pairs are disulfide-bonded: Cys30/Cys58, Cys37/Cys51, and Cys41/Cys59. A disordered region spans residues 66–89 (PFSNPKHSVLHTAEQDPSPSLGGT).

It belongs to the beta-defensin family. As to expression, expressed in the liver, gall bladder, kidney, small intestine, spleen, testis, ovary and male and female reproductive tracts. Not detected in the ovarian stroma and the theca and granulosa layers of the ovarian follicle.

The protein localises to the secreted. It localises to the cytoplasmic granule. Its function is as follows. Has bactericidal activity. Potent activity against E.coli, L.monocytogenes, S.typhimurium and S.pyogenes but mot against S.aureus. In terms of biological role, has bactericidal activity. The chain is Gallinacin-13 (GAL13) from Gallus gallus (Chicken).